We begin with the raw amino-acid sequence, 274 residues long: 2,3,4,5-tetrahydropyridine-2,6-dicarboxylate N-succinyltransferase (274 aa).

Substrate is bound by residues R106 and D143.

This sequence belongs to the transferase hexapeptide repeat family. Homotrimer.

The protein localises to the cytoplasm. The catalysed reaction is (S)-2,3,4,5-tetrahydrodipicolinate + succinyl-CoA + H2O = (S)-2-succinylamino-6-oxoheptanedioate + CoA. Its pathway is amino-acid biosynthesis; L-lysine biosynthesis via DAP pathway; LL-2,6-diaminopimelate from (S)-tetrahydrodipicolinate (succinylase route): step 1/3. The protein is 2,3,4,5-tetrahydropyridine-2,6-dicarboxylate N-succinyltransferase of Acidovorax sp. (strain JS42).